Reading from the N-terminus, the 420-residue chain is UDP-N-acetylglucosamine 1-carboxyvinyltransferase (420 aa).

Residue 22-23 coordinates phosphoenolpyruvate; that stretch reads KN. R92 contributes to the UDP-N-acetyl-alpha-D-glucosamine binding site. The active-site Proton donor is the C116. C116 carries the post-translational modification 2-(S-cysteinyl)pyruvic acid O-phosphothioketal. UDP-N-acetyl-alpha-D-glucosamine contacts are provided by residues 121 to 125, D304, and I326; that span reads RPVDQ.

Belongs to the EPSP synthase family. MurA subfamily.

Its subcellular location is the cytoplasm. It catalyses the reaction phosphoenolpyruvate + UDP-N-acetyl-alpha-D-glucosamine = UDP-N-acetyl-3-O-(1-carboxyvinyl)-alpha-D-glucosamine + phosphate. The protein operates within cell wall biogenesis; peptidoglycan biosynthesis. In terms of biological role, cell wall formation. Adds enolpyruvyl to UDP-N-acetylglucosamine. In Paraburkholderia xenovorans (strain LB400), this protein is UDP-N-acetylglucosamine 1-carboxyvinyltransferase.